Here is a 44-residue protein sequence, read N- to C-terminus: Large ribosomal subunit protein bL34 (44 aa).

2 stretches are compositionally biased toward basic residues: residues 1–14 (MKRT…KRQK) and 31–44 (LSAR…RLAV). A disordered region spans residues 1-44 (MKRTLGGTTRKRQKTSGFRARMRTASGRRVLSARRRRGRHRLAV).

Belongs to the bacterial ribosomal protein bL34 family.

This chain is Large ribosomal subunit protein bL34, found in Gloeobacter violaceus (strain ATCC 29082 / PCC 7421).